The following is a 360-amino-acid chain: Aminomethyltransferase (360 aa).

It belongs to the GcvT family. As to quaternary structure, the glycine cleavage system is composed of four proteins: P, T, L and H.

It carries out the reaction N(6)-[(R)-S(8)-aminomethyldihydrolipoyl]-L-lysyl-[protein] + (6S)-5,6,7,8-tetrahydrofolate = N(6)-[(R)-dihydrolipoyl]-L-lysyl-[protein] + (6R)-5,10-methylene-5,6,7,8-tetrahydrofolate + NH4(+). Functionally, the glycine cleavage system catalyzes the degradation of glycine. This is Aminomethyltransferase from Methylococcus capsulatus (strain ATCC 33009 / NCIMB 11132 / Bath).